The sequence spans 227 residues: Chaperone protein FocC (227 aa).

An N-terminal signal peptide occupies residues 1–21; the sequence is MRIWAVLASFLVFFYIPQSYA.

This sequence belongs to the periplasmic pilus chaperone family.

It is found in the periplasm. Its function is as follows. Involved in the biogenesis of the F1C fimbriae. The polypeptide is Chaperone protein FocC (focC) (Escherichia coli O6:H1 (strain CFT073 / ATCC 700928 / UPEC)).